A 142-amino-acid polypeptide reads, in one-letter code: uncharacterized protein (142 aa).

The protein belongs to the IIV-3 015R family.

This is an uncharacterized protein from Aedes vexans (Inland floodwater mosquito).